Reading from the N-terminus, the 254-residue chain is 5'-nucleotidase SurE (254 aa).

The a divalent metal cation site is built by D8, D9, S39, and N91.

Belongs to the SurE nucleotidase family. Requires a divalent metal cation as cofactor.

It localises to the cytoplasm. It catalyses the reaction a ribonucleoside 5'-phosphate + H2O = a ribonucleoside + phosphate. Nucleotidase that shows phosphatase activity on nucleoside 5'-monophosphates. This Pseudoalteromonas translucida (strain TAC 125) protein is 5'-nucleotidase SurE.